Consider the following 149-residue polypeptide: Large ribosomal subunit protein bL9 (149 aa).

This sequence belongs to the bacterial ribosomal protein bL9 family.

Its function is as follows. Binds to the 23S rRNA. This Geobacillus stearothermophilus (Bacillus stearothermophilus) protein is Large ribosomal subunit protein bL9 (rplI).